The chain runs to 192 residues: 7-methyl-GTP pyrophosphatase (192 aa).

Catalysis depends on Asp69, which acts as the Proton acceptor.

The protein belongs to the Maf family. YceF subfamily. A divalent metal cation serves as cofactor.

Its subcellular location is the cytoplasm. The enzyme catalyses N(7)-methyl-GTP + H2O = N(7)-methyl-GMP + diphosphate + H(+). Functionally, nucleoside triphosphate pyrophosphatase that hydrolyzes 7-methyl-GTP (m(7)GTP). May have a dual role in cell division arrest and in preventing the incorporation of modified nucleotides into cellular nucleic acids. In Pseudomonas savastanoi pv. phaseolicola (strain 1448A / Race 6) (Pseudomonas syringae pv. phaseolicola (strain 1448A / Race 6)), this protein is 7-methyl-GTP pyrophosphatase.